Here is a 331-residue protein sequence, read N- to C-terminus: uncharacterized protein (331 aa).

Pentapeptide repeat domains lie at 50-89 (ENLQ…RLGH), 90-129 (CQMN…NFKG), 140-179 (ANLR…NLQE), 185-224 (ANLR…KLTG), and 230-269 (TNLS…NLTQ).

This is an uncharacterized protein from Synechocystis sp. (strain ATCC 27184 / PCC 6803 / Kazusa).